Consider the following 54-residue polypeptide: NPRGLPAFKHGNXVLNESYAXMYLESQFGSXGXLIPDADVIYYNWKVPEGERHD.

The protein belongs to the GST superfamily. Theta family. Homodimer. Post-translationally, the N-terminus is blocked.

Its subcellular location is the cytoplasm. It catalyses the reaction RX + glutathione = an S-substituted glutathione + a halide anion + H(+). In terms of biological role, conjugation of reduced glutathione to a wide number of exogenous and endogenous hydrophobic electrophiles. The chain is Glutathione S-transferase 6.7 from Dicentrarchus labrax (European seabass).